Here is a 356-residue protein sequence, read N- to C-terminus: Tyrosine recombinase XerS (356 aa).

The 106-residue stretch at 16 to 121 folds into the Core-binding (CB) domain; that stretch reads LMPWYVLEYY…ALSSLYKYLT (106 aa). Residues 169 to 354 form the Tyr recombinase domain; it reads GFLTYIDQEH…VSDEQKNALD (186 aa). Catalysis depends on residues arginine 210, lysine 234, histidine 306, arginine 309, and histidine 332. Catalysis depends on tyrosine 341, which acts as the O-(3'-phospho-DNA)-tyrosine intermediate.

It belongs to the 'phage' integrase family. XerS subfamily.

It localises to the cytoplasm. Its activity is regulated as follows. FtsK is required for recombination. Its function is as follows. Site-specific tyrosine recombinase, which acts by catalyzing the cutting and rejoining of the recombining DNA molecules. Essential to convert dimers of the bacterial chromosome into monomers to permit their segregation at cell division. This Streptococcus pneumoniae serotype 4 (strain ATCC BAA-334 / TIGR4) protein is Tyrosine recombinase XerS.